Reading from the N-terminus, the 353-residue chain is tRNA-specific 2-thiouridylase MnmA 2 (353 aa).

An ATP-binding site is contributed by 6–13 (LLSGGVDS). An interaction with target base in tRNA region spans residues 92–94 (NPD). C97 (nucleophile) is an active-site residue. An intrachain disulfide couples C97 to C192. G120 provides a ligand contact to ATP. An interaction with tRNA region spans residues 142–144 (KDQ). The active-site Cysteine persulfide intermediate is C192.

Belongs to the MnmA/TRMU family.

The protein resides in the cytoplasm. The catalysed reaction is S-sulfanyl-L-cysteinyl-[protein] + uridine(34) in tRNA + AH2 + ATP = 2-thiouridine(34) in tRNA + L-cysteinyl-[protein] + A + AMP + diphosphate + H(+). Its function is as follows. Catalyzes the 2-thiolation of uridine at the wobble position (U34) of tRNA, leading to the formation of s(2)U34. This chain is tRNA-specific 2-thiouridylase MnmA 2, found in Bacteroides fragilis (strain YCH46).